We begin with the raw amino-acid sequence, 234 residues long: Cell fusion protein dni1 (234 aa).

Residues 1–32 (MLFLHSVVQGTGTLCTLAAWILLALVMTGCQS) form the signal peptide. Residues 33-96 (STTSKFQLFS…RSKFLINEVH (64 aa)) are Extracellular-facing. The chain crosses the membrane as a helical span at residues 97–117 (PWMIVFSFCVCGVSFLMGVVS). Over 118–132 (SLPLIGRLEFLRNIR) the chain is Cytoplasmic. The helical transmembrane segment at 133–153 (ISLSFFSFFSILVTALFAHVA) threads the bilayer. Residues 154–178 (VSSFVMAVGNGTQNRVTASLGKKAM) lie on the Extracellular side of the membrane. The helical transmembrane segment at 179-199 (IFLWCSMGLVTLTGITDSIIL) threads the bilayer. The Cytoplasmic portion of the chain corresponds to 200–234 (LVTSRTKKIRKTILEKSKVLTPSSSFSSKSSTTKY).

Belongs to the SUR7 family.

It localises to the cell membrane. The protein resides in the cell tip. Cell membrane protein which plays a relevant role in coordinating membrane organization and cell wall remodeling during mating. This chain is Cell fusion protein dni1 (dni1), found in Schizosaccharomyces pombe (strain 972 / ATCC 24843) (Fission yeast).